Reading from the N-terminus, the 83-residue chain is Cytochrome b559 subunit alpha (83 aa).

A helical membrane pass occupies residues 21-35; sequence VIHSITIPSLFIAGW. Histidine 23 is a binding site for heme.

Belongs to the PsbE/PsbF family. In terms of assembly, heterodimer of an alpha subunit and a beta subunit. PSII is composed of 1 copy each of membrane proteins PsbA, PsbB, PsbC, PsbD, PsbE, PsbF, PsbH, PsbI, PsbJ, PsbK, PsbL, PsbM, PsbT, PsbX, PsbY, PsbZ, Psb30/Ycf12, at least 3 peripheral proteins of the oxygen-evolving complex and a large number of cofactors. It forms dimeric complexes. Requires heme b as cofactor.

The protein localises to the plastid. Its subcellular location is the chloroplast thylakoid membrane. This b-type cytochrome is tightly associated with the reaction center of photosystem II (PSII). PSII is a light-driven water:plastoquinone oxidoreductase that uses light energy to abstract electrons from H(2)O, generating O(2) and a proton gradient subsequently used for ATP formation. It consists of a core antenna complex that captures photons, and an electron transfer chain that converts photonic excitation into a charge separation. The protein is Cytochrome b559 subunit alpha of Agrostis stolonifera (Creeping bentgrass).